A 577-amino-acid chain; its full sequence is 2-succinyl-5-enolpyruvyl-6-hydroxy-3-cyclohexene-1-carboxylate synthase (577 aa).

The protein belongs to the TPP enzyme family. MenD subfamily. Homodimer. Mg(2+) is required as a cofactor. Mn(2+) serves as cofactor. The cofactor is thiamine diphosphate.

The enzyme catalyses isochorismate + 2-oxoglutarate + H(+) = 5-enolpyruvoyl-6-hydroxy-2-succinyl-cyclohex-3-ene-1-carboxylate + CO2. The protein operates within quinol/quinone metabolism; 1,4-dihydroxy-2-naphthoate biosynthesis; 1,4-dihydroxy-2-naphthoate from chorismate: step 2/7. Its pathway is quinol/quinone metabolism; menaquinone biosynthesis. Its function is as follows. Catalyzes the thiamine diphosphate-dependent decarboxylation of 2-oxoglutarate and the subsequent addition of the resulting succinic semialdehyde-thiamine pyrophosphate anion to isochorismate to yield 2-succinyl-5-enolpyruvyl-6-hydroxy-3-cyclohexene-1-carboxylate (SEPHCHC). This chain is 2-succinyl-5-enolpyruvyl-6-hydroxy-3-cyclohexene-1-carboxylate synthase, found in Geobacillus kaustophilus (strain HTA426).